We begin with the raw amino-acid sequence, 125 residues long: Probable prefoldin subunit 6 (125 aa).

It belongs to the prefoldin subunit beta family. As to quaternary structure, heterohexamer of two PFD-alpha type and four PFD-beta type subunits.

Functionally, binds specifically to cytosolic chaperonin (c-CPN) and transfers target proteins to it. Binds to nascent polypeptide chain and promotes folding in an environment in which there are many competing pathways for nonnative proteins. This chain is Probable prefoldin subunit 6, found in Drosophila melanogaster (Fruit fly).